The sequence spans 578 residues: MSSKKMVNSVEGCADDALAGLVASNPDLQLLQGHRVALRSDLDTLKGRVALLSGGGSGHEPAHAGFIGKGMLTGVIAGSVFASPPVGSILAAIRAVAQAGTVGTLLIVKNYTGDRLNFGLAMEQAKAEGISVEMVIVEDDSAFTVLKKAGRRGLCGTVLIHKVAGALAEEGMGLEEITKRVSVIAKTMGTLGVSLSSCSVPGATHTFELAADEIELGLGIHGEAGVRRIKIAPVDQIVTLMLDHMTNTSNIFHVPVRSGSSVVLIVNNLGGLSFLELGIIADAAIRLLEGRGVKVARALVGTFMSALEMPGVSLTLMLVDEPVLKLIDAETTAKAWPHMAKVSVTGRKRIRAAPTEPPEAPEATAAGGVTSKQMALVLDRICTTLIGLEEHLNALDRAAGDGDCGSTHSRAAKAIQGWLKEGPSLTSPAQVLSRLSVLLLERMGGSSGALYGLFLTAAAQPLKAKTDLPTWSAAMDAGLESMQKYGKAAPGDRTMLDSLWAAAQEFQAWKSPGASLLPVLTKAVKSAEAAAEATKNMEAGAGRASYISSAQLDQPDPGAVAAAAIFRAILEVLQTQGA.

Residues 9 to 336 (SVEGCADDAL…IDAETTAKAW (328 aa)) form the DhaK domain. Residues 56-59 (GSGH), K109, and D114 contribute to the dihydroxyacetone site. The Tele-hemiaminal-histidine intermediate role is filled by H221. The region spanning 372 to 571 (KQMALVLDRI…AAAIFRAILE (200 aa)) is the DhaL domain. ATP-binding positions include 401–404 (DGDC), 446–447 (SS), G486, and 494–495 (TM). Phosphoserine occurs at positions 511 and 545. Position 556 to 558 (556 to 558 (DPG)) interacts with ATP.

It belongs to the dihydroxyacetone kinase (DAK) family. Homodimer. Interacts with IFIH1 (via the CARD domains), the interaction is inhibited by viral infection. Mg(2+) is required as a cofactor. Requires Mn(2+) as cofactor. It depends on Co(2+) as a cofactor.

The catalysed reaction is dihydroxyacetone + ATP = dihydroxyacetone phosphate + ADP + H(+). It catalyses the reaction D-glyceraldehyde + ATP = D-glyceraldehyde 3-phosphate + ADP + H(+). The enzyme catalyses FAD = riboflavin cyclic-4',5'-phosphate + AMP + H(+). Its activity is regulated as follows. Each activity is inhibited by the substrate(s) of the other. In terms of biological role, catalyzes both the phosphorylation of dihydroxyacetone and of glyceraldehyde, and the splitting of ribonucleoside diphosphate-X compounds among which FAD is the best substrate. Represses IFIH1-mediated cellular antiviral response. The polypeptide is Triokinase/FMN cyclase (Mus musculus (Mouse)).